A 134-amino-acid polypeptide reads, in one-letter code: Ribosome-binding factor A (134 aa).

Belongs to the RbfA family. Monomer. Binds 30S ribosomal subunits, but not 50S ribosomal subunits or 70S ribosomes.

It is found in the cytoplasm. Functionally, one of several proteins that assist in the late maturation steps of the functional core of the 30S ribosomal subunit. Associates with free 30S ribosomal subunits (but not with 30S subunits that are part of 70S ribosomes or polysomes). Required for efficient processing of 16S rRNA. May interact with the 5'-terminal helix region of 16S rRNA. This is Ribosome-binding factor A from Parasynechococcus marenigrum (strain WH8102).